A 118-amino-acid chain; its full sequence is Large ribosomal subunit protein uL22 (118 aa).

Belongs to the universal ribosomal protein uL22 family. As to quaternary structure, part of the 50S ribosomal subunit.

Functionally, this protein binds specifically to 23S rRNA; its binding is stimulated by other ribosomal proteins, e.g. L4, L17, and L20. It is important during the early stages of 50S assembly. It makes multiple contacts with different domains of the 23S rRNA in the assembled 50S subunit and ribosome. The globular domain of the protein is located near the polypeptide exit tunnel on the outside of the subunit, while an extended beta-hairpin is found that lines the wall of the exit tunnel in the center of the 70S ribosome. The chain is Large ribosomal subunit protein uL22 from Synechococcus sp. (strain RCC307).